Reading from the N-terminus, the 125-residue chain is Fluoride-specific ion channel FluC (125 aa).

The next 4 membrane-spanning stretches (helical) occupy residues 2–22 (WLSILAIFCGAGLGALLRTGF), 35–55 (LGTLISNMVGGYLIGIALAFF), 68–88 (LIITGFLGGLTTFSSFSAEVV), and 98–118 (WALGTALLHLVGSLVLTLLGI). Residues glycine 75 and threonine 78 each contribute to the Na(+) site.

This sequence belongs to the fluoride channel Fluc/FEX (TC 1.A.43) family.

The protein localises to the cell inner membrane. The enzyme catalyses fluoride(in) = fluoride(out). Its activity is regulated as follows. Na(+) is not transported, but it plays an essential structural role and its presence is essential for fluoride channel function. Its function is as follows. Fluoride-specific ion channel. Important for reducing fluoride concentration in the cell, thus reducing its toxicity. This chain is Fluoride-specific ion channel FluC, found in Polynucleobacter asymbioticus (strain DSM 18221 / CIP 109841 / QLW-P1DMWA-1) (Polynucleobacter necessarius subsp. asymbioticus).